Reading from the N-terminus, the 597-residue chain is Formate--tetrahydrofolate ligase (597 aa).

84 to 91 (TPLGEGKS) serves as a coordination point for ATP.

Belongs to the formate--tetrahydrofolate ligase family.

It catalyses the reaction (6S)-5,6,7,8-tetrahydrofolate + formate + ATP = (6R)-10-formyltetrahydrofolate + ADP + phosphate. The protein operates within one-carbon metabolism; tetrahydrofolate interconversion. In Dehalococcoides mccartyi (strain ATCC BAA-2266 / KCTC 15142 / 195) (Dehalococcoides ethenogenes (strain 195)), this protein is Formate--tetrahydrofolate ligase.